The following is an 843-amino-acid chain: Speckle targeted PIP5K1A-regulated poly(A) polymerase (843 aa).

The Matrin-type zinc-finger motif lies at 25 to 55 (FRCLLCGVNIPNRPSLTDHLSGRRHVRLHEE). Positions 54–126 (EERDKRNQQQ…ALEEPQIKLS (73 aa)) constitute an RRM domain. Over residues 134 to 146 (PREKKEFQRKKGG) the composition is skewed to basic residues. The disordered stretch occupies residues 134 to 157 (PREKKEFQRKKGGSPRTLQPPDPE). Ser215 is an ATP binding site. Mg(2+) is bound by residues Asp226 and Asp228. Asp226 and Asp228 together coordinate UTP. Residues 241–255 (VEGKAEKEIQNREES) show a composition bias toward basic and acidic residues. The disordered stretch occupies residues 241–292 (VEGKAEKEIQNREESSTDMEVSMEDPETERKEEEMEIGNSKNDEDEDVTPGL). Asn354 lines the ATP pocket. Residues Asn354, Arg376, Tyr398, and His516 each coordinate UTP. One can recognise a PAP-associated domain in the interval 456-516 (SLSSLLSEFF…NIQDPFELSH (61 aa)). Residues 564–837 (PPTERECVGR…YLPRMVAQIQ (274 aa)) are KA1; binds the bulging loops of U6 snRNA but is dispensable for terminal uridylyltransferase activity. Residues 653–691 (QNNTKEASKQKSIFKTEEGMTESARRKREMTEPCMSDMT) form a disordered region. The segment covering 658–670 (EASKQKSIFKTEE) has biased composition (basic and acidic residues).

The protein belongs to the DNA polymerase type-B-like family. As to quaternary structure, associates with the cleavage and polyadenylation specificity factor (CPSF) complex. Requires Mg(2+) as cofactor. The cofactor is Mn(2+).

Its subcellular location is the nucleus. It is found in the nucleolus. It localises to the nucleus speckle. It carries out the reaction RNA(n) + UTP = RNA(n)-3'-uridine ribonucleotide + diphosphate. It catalyses the reaction RNA(n) + ATP = RNA(n)-3'-adenine ribonucleotide + diphosphate. In terms of biological role, poly(A) polymerase that creates the 3'-poly(A) tail of specific pre-mRNAs. In addition to polyadenylation, it is also required for the 3'-end cleavage of pre-mRNAs: binds to the 3'UTR of targeted pre-mRNAs and promotes the recruitment and assembly of the CPSF complex on the 3'UTR of pre-mRNAs. In addition to adenylyltransferase activity, also has uridylyltransferase activity. However, the ATP ratio is higher than UTP in cells, suggesting that it functions primarily as a poly(A) polymerase. The polypeptide is Speckle targeted PIP5K1A-regulated poly(A) polymerase (tut1) (Xenopus tropicalis (Western clawed frog)).